Consider the following 175-residue polypeptide: MAPISVILVTDHKLPEAMSTTREKLLATTSKFVSTFGSFDVDEILAIRTPTCLYHQCCPSFNKNVVTNEETRANFPQFIATFRRFDFSILEPDHTLVDEASRRVMIRAKASAESIVGAYENEYIFILKMTEDCRLVDEIYEFYDTIRLKDLQHRLEAKHISYGDTAPFETRTTQF.

This sequence belongs to the trt14 isomerase family. As to quaternary structure, homodimer.

The protein operates within secondary metabolite biosynthesis; terpenoid biosynthesis. Part of the gene cluster that mediates the biosynthesis of calidodehydroaustin, a fungal meroterpenoid. The first step of the pathway is the synthesis of 3,5-dimethylorsellinic acid by the polyketide synthase ausA. 3,5-dimethylorsellinic acid is then prenylated by the polyprenyl transferase ausN. Further epoxidation by the FAD-dependent monooxygenase ausM and cyclization by the probable terpene cyclase ausL lead to the formation of protoaustinoid A. Protoaustinoid A is then oxidized to spiro-lactone preaustinoid A3 by the combined action of the FAD-binding monooxygenases ausB and ausC, and the dioxygenase ausE. Acid-catalyzed keto-rearrangement and ring contraction of the tetraketide portion of preaustinoid A3 by ausJ lead to the formation of preaustinoid A4. The aldo-keto reductase ausK, with the help of ausH, is involved in the next step by transforming preaustinoid A4 into isoaustinone which is in turn hydroxylated by the P450 monooxygenase ausI to form austinolide. The cytochrome P450 monooxygenase ausG modifies austinolide to austinol. Austinol is further acetylated to austin by the O-acetyltransferase ausP, which spontaneously changes to dehydroaustin. The cytochrome P450 monooxygenase ausR then converts dehydroaustin is into 7-dehydrodehydroaustin. The hydroxylation catalyzed by ausR permits the O-acetyltransferase ausQ to add an additional acetyl group to the molecule, leading to the formation of acetoxydehydroaustin. The short chain dehydrogenase ausT catalyzes the reduction of the double bond present between carbon atoms 1 and 2 to convert 7-dehydrodehydroaustin into 1,2-dihydro-7-hydroxydehydroaustin. AusQ catalyzes not only an acetylation reaction but also the addition of the PKS ausV diketide product to 1,2-dihydro-7-hydroxydehydroaustin, forming precalidodehydroaustin. Finally, the iron/alpha-ketoglutarate-dependent dioxygenase converts precalidodehydroaustin into calidodehydroaustin. This is Austinoid biosynthesis cluster protein F from Aspergillus calidoustus.